We begin with the raw amino-acid sequence, 202 residues long: Large ribosomal subunit protein bL9 (202 aa).

Residues 177-202 (AGEFFDPEAEPDDVAEAGGEQTAEEK) are disordered. Residues 181–191 (FDPEAEPDDVA) are compositionally biased toward acidic residues.

It belongs to the bacterial ribosomal protein bL9 family.

In terms of biological role, binds to the 23S rRNA. This Nitrobacter hamburgensis (strain DSM 10229 / NCIMB 13809 / X14) protein is Large ribosomal subunit protein bL9.